Consider the following 388-residue polypeptide: Flap endonuclease 1 (388 aa).

The tract at residues 1 to 104 (MGILGLSKLI…GELAKRAERR (104 aa)) is N-domain. Position 34 (Asp-34) interacts with Mg(2+). The DNA site is built by Arg-47 and Arg-70. Mg(2+) contacts are provided by Asp-86, Glu-158, Glu-160, Asp-179, and Asp-181. The I-domain stretch occupies residues 122–253 (EIEKFNRRLV…KRAIELINNY (132 aa)). Residue Glu-158 coordinates DNA. DNA-binding residues include Gly-231 and Asp-233. Asp-233 contributes to the Mg(2+) binding site. Residues 336–344 (TQVRLDSFF) form an interaction with PCNA region. Positions 343–388 (FFKTLPSTPSATNAAKRKAEEAKKSANNKKAKTSGGGGGGRGRRPK) are disordered.

The protein belongs to the XPG/RAD2 endonuclease family. FEN1 subfamily. As to quaternary structure, interacts with PCNA. Three molecules of FEN1 bind to one PCNA trimer with each molecule binding to one PCNA monomer. PCNA stimulates the nuclease activity without altering cleavage specificity. The cofactor is Mg(2+). In terms of processing, phosphorylated. Phosphorylation upon DNA damage induces relocalization to the nuclear plasma.

The protein localises to the nucleus. It localises to the nucleolus. It is found in the nucleoplasm. Its subcellular location is the mitochondrion. Its function is as follows. Structure-specific nuclease with 5'-flap endonuclease and 5'-3' exonuclease activities involved in DNA replication and repair. During DNA replication, cleaves the 5'-overhanging flap structure that is generated by displacement synthesis when DNA polymerase encounters the 5'-end of a downstream Okazaki fragment. It enters the flap from the 5'-end and then tracks to cleave the flap base, leaving a nick for ligation. Also involved in the long patch base excision repair (LP-BER) pathway, by cleaving within the apurinic/apyrimidinic (AP) site-terminated flap. Acts as a genome stabilization factor that prevents flaps from equilibrating into structures that lead to duplications and deletions. Also possesses 5'-3' exonuclease activity on nicked or gapped double-stranded DNA, and exhibits RNase H activity. Also involved in replication and repair of rDNA and in repairing mitochondrial DNA. This chain is Flap endonuclease 1, found in Drosophila ananassae (Fruit fly).